The primary structure comprises 556 residues: 2-succinyl-5-enolpyruvyl-6-hydroxy-3-cyclohexene-1-carboxylate synthase (556 aa).

This sequence belongs to the TPP enzyme family. MenD subfamily. As to quaternary structure, homodimer. It depends on Mg(2+) as a cofactor. The cofactor is Mn(2+). Requires thiamine diphosphate as cofactor.

It catalyses the reaction isochorismate + 2-oxoglutarate + H(+) = 5-enolpyruvoyl-6-hydroxy-2-succinyl-cyclohex-3-ene-1-carboxylate + CO2. It participates in quinol/quinone metabolism; 1,4-dihydroxy-2-naphthoate biosynthesis; 1,4-dihydroxy-2-naphthoate from chorismate: step 2/7. The protein operates within quinol/quinone metabolism; menaquinone biosynthesis. In terms of biological role, catalyzes the thiamine diphosphate-dependent decarboxylation of 2-oxoglutarate and the subsequent addition of the resulting succinic semialdehyde-thiamine pyrophosphate anion to isochorismate to yield 2-succinyl-5-enolpyruvyl-6-hydroxy-3-cyclohexene-1-carboxylate (SEPHCHC). This Mycobacterium leprae (strain Br4923) protein is 2-succinyl-5-enolpyruvyl-6-hydroxy-3-cyclohexene-1-carboxylate synthase.